A 473-amino-acid polypeptide reads, in one-letter code: Ribulose bisphosphate carboxylase large chain (473 aa).

Positions 116 and 166 each coordinate substrate. The active-site Proton acceptor is K168. K170 serves as a coordination point for substrate. Positions 194, 196, and 197 each coordinate Mg(2+). Position 194 is an N6-carboxylysine (K194). Residue H287 is the Proton acceptor of the active site. Positions 288, 320, and 372 each coordinate substrate.

This sequence belongs to the RuBisCO large chain family. Type I subfamily. Heterohexadecamer of 8 large chains and 8 small chains. Mg(2+) is required as a cofactor.

It catalyses the reaction 2 (2R)-3-phosphoglycerate + 2 H(+) = D-ribulose 1,5-bisphosphate + CO2 + H2O. It carries out the reaction D-ribulose 1,5-bisphosphate + O2 = 2-phosphoglycolate + (2R)-3-phosphoglycerate + 2 H(+). RuBisCO catalyzes two reactions: the carboxylation of D-ribulose 1,5-bisphosphate, the primary event in carbon dioxide fixation, as well as the oxidative fragmentation of the pentose substrate. Both reactions occur simultaneously and in competition at the same active site. The polypeptide is Ribulose bisphosphate carboxylase large chain (Hydrogenophaga pseudoflava (Pseudomonas carboxydoflava)).